Reading from the N-terminus, the 341-residue chain is Heme A synthase (341 aa).

The next 8 membrane-spanning stretches (helical) occupy residues 7–27, 92–112, 118–138, 159–179, 190–210, 253–273, 280–300, and 302–322; these read VTVWLGVCCSMTLLMVVIGGI, LFGRALGAVFCLPIPYFAITK, MVAKLLIVALLGGMQGAMGWF, LFLTILLFSILWHSFLRCAGV, FFTAAAVVGLTVLQMVLGALV, FLHRLVAVLIVVCAAPLPFWL, LFLACVALQFLLGVATLVSVV, and IFLAAMHQVFGFVTLAAGVHM. His-255 contacts heme. His-308 is a binding site for heme.

Belongs to the COX15/CtaA family. Type 2 subfamily. In terms of assembly, interacts with CtaB. The cofactor is heme b.

Its subcellular location is the cell membrane. It carries out the reaction Fe(II)-heme o + 2 A + H2O = Fe(II)-heme a + 2 AH2. Its pathway is porphyrin-containing compound metabolism; heme A biosynthesis; heme A from heme O: step 1/1. Its function is as follows. Catalyzes the conversion of heme O to heme A by two successive hydroxylations of the methyl group at C8. The first hydroxylation forms heme I, the second hydroxylation results in an unstable dihydroxymethyl group, which spontaneously dehydrates, resulting in the formyl group of heme A. The sequence is that of Heme A synthase from Anaplasma marginale (strain St. Maries).